A 117-amino-acid chain; its full sequence is SPbeta prophage-derived uncharacterized protein YosL (117 aa).

The polypeptide is SPbeta prophage-derived uncharacterized protein YosL (yosL) (Bacillus subtilis (strain 168)).